The primary structure comprises 169 residues: Endoribonuclease YbeY (169 aa).

3 residues coordinate Zn(2+): histidine 128, histidine 132, and histidine 138.

The protein belongs to the endoribonuclease YbeY family. Zn(2+) is required as a cofactor.

The protein localises to the cytoplasm. Single strand-specific metallo-endoribonuclease involved in late-stage 70S ribosome quality control and in maturation of the 3' terminus of the 16S rRNA. In Rhizorhabdus wittichii (strain DSM 6014 / CCUG 31198 / JCM 15750 / NBRC 105917 / EY 4224 / RW1) (Sphingomonas wittichii), this protein is Endoribonuclease YbeY.